A 235-amino-acid polypeptide reads, in one-letter code: Small ribosomal subunit protein uS2 (235 aa).

This sequence belongs to the universal ribosomal protein uS2 family.

The chain is Small ribosomal subunit protein uS2 from Anoxybacillus flavithermus (strain DSM 21510 / WK1).